The primary structure comprises 454 residues: Anthocyanidin 3-O-galactosyltransferase 3GT6 (454 aa).

Residues 1-21 (MTNSSKGRHVAVLPFPFSTHA) form the signal peptide. Ser-18 and His-20 together coordinate an anthocyanidin. Catalysis depends on His-20, which acts as the Proton acceptor. Asp-117 functions as the Charge relay in the catalytic mechanism. An an anthocyanidin-binding site is contributed by His-148. The UDP-alpha-D-glucose site is built by Ala-331, Gln-333, His-348, Trp-351, Asn-352, Ser-353, and Glu-356. Gly-371 contributes to the an anthocyanidin binding site. UDP-alpha-D-glucose is bound at residue Asp-372. Asn-441 carries an N-linked (GlcNAc...) asparagine glycan.

This sequence belongs to the UDP-glycosyltransferase family. Monomer. In terms of tissue distribution, mostly expressed in leaves and flowers and, to a lower extent, in roots. In flowers, mainly observed in petals, stamens and scapes, and at lower levels in pistils and toruses.

The catalysed reaction is cyanidin + UDP-alpha-D-galactose = cyanidin 3-O-beta-D-galactoside + UDP + H(+). The enzyme catalyses cyanidin + UDP-alpha-D-glucose = cyanidin 3-O-beta-D-glucoside + UDP + H(+). It catalyses the reaction delphinidin + UDP-alpha-D-glucose = delphinidin 3-O-beta-D-glucoside + UDP. It carries out the reaction peonidin + UDP-alpha-D-glucose = peonidin 3-O-beta-D-glucoside + UDP. The catalysed reaction is pelargonidin + UDP-alpha-D-glucose = pelargonidin 3-O-beta-D-glucoside + UDP. The enzyme catalyses delphinidin + UDP-alpha-D-galactose = delphinidin 3-O-beta-D-galactoside + UDP + H(+). It catalyses the reaction pelargonidin + UDP-alpha-D-galactose = pelargonidin 3-O-beta-D-galactoside betaine + UDP. It carries out the reaction peonidin + UDP-alpha-D-galactose = peonidin 3-O-beta-D-galactoside + UDP. The catalysed reaction is petunidin + UDP-alpha-D-galactose = petunidin 3-O-beta-D-galactoside + UDP. The enzyme catalyses petunidin + UDP-alpha-D-glucose = petunidin 3-O-beta-D-glucoside + UDP. It catalyses the reaction an anthocyanidin + UDP-alpha-D-glucose + H(+) = an anthocyanidin 3-O-beta-D-glucoside + UDP. It carries out the reaction an anthocyanidin + UDP-alpha-D-galactose = an anthocyanidin 3-O-beta-D-galactoside + UDP. It functions in the pathway pigment biosynthesis; anthocyanin biosynthesis. Flavonoid 3-O-glycosyltransferase involved in the biosynthesis of anthocyanins conferring flower red/pink colors, mainly anthocyanidin 3-O-glycosides. Catalyzes the addition of UDP-sugar to the 3-OH of anthocyanidin, with a preference for UDP-galactose (UDP-Gal) as sugar donor and cyanidin as substrate; able to use delphinidin, pelargonidin, peonidin and petunidin as substrates in the presence of UDP-Gal, but barely active on malvidin. Can also use UDP-glucose (UDP-Glu) as sugar donor with cyanidin, delphinidin, pelargonidin, peonidin and petunidin as substrates, but not active on malvidin. In Rhododendron delavayi (Rhododendron), this protein is Anthocyanidin 3-O-galactosyltransferase 3GT6.